We begin with the raw amino-acid sequence, 92 residues long: Alpha-conotoxin FrXXA (92 aa).

The first 24 residues, 1–24 (MPKLEMMLLVLLILPLSYFDSAGG), serve as a signal peptide directing secretion. A propeptide spanning residues 25–45 (QAVKVDGHGDGMDRYLQRDDR) is cleaved from the precursor. 4 disulfide bridges follow: Cys-63-Cys-72, Cys-68-Cys-80, Cys-73-Cys-90, and Cys-78-Cys-92.

The protein belongs to the conotoxin D superfamily. In terms of assembly, homodimer; disulfide-linked. In terms of processing, the homodimer contains 10 disulfide bonds. Expressed by the venom duct.

The protein localises to the secreted. Its function is as follows. Alpha-conotoxins act on postsynaptic membranes, they bind to the nicotinic acetylcholine receptors (nAChR) and thus inhibit them. Through its two C-terminal domains, this homodimeric protein would bind to two nAChR allosteric sites, located outside the nAChR C-loop of the principal binding face and at the adjacent binding interface in a clockwise direction. This toxin blocks both neuronal and muscular subtypes: human alpha-7/CHRNA7, human alpha-3-beta-2 (CHRNA3-CHRNB2), human alpha-4-beta-2 (CHRNA4-CHRNB2), mouse adult muscular subtype alpha-1-beta-1-delta-epsilon (CHRNA1-CHRNB1-CHRND-CHRNE), and mouse fetal muscular subtype alpha-1-beta-1-gamma-delta (CHRNA1-CHRNB1-CHRNG-CHRND). Shows different dissociation rates towards the different subtypes, with a very slow rate towards alpha-7 subtype (almost irreversible), followed by the adult muscular subtype, the fetal muscular subtype, alpha-3-beta-2 and alpha-4-beta-2 (almost entirely reversible within a few minutes of washing). This Conus fergusoni (Ferguson's cone) protein is Alpha-conotoxin FrXXA.